The chain runs to 243 residues: Collagen triple helix repeat-containing protein 1 (243 aa).

A signal peptide spans 1–30 (MRPQGPAASPQRLRGLLLLLLLQLPAPSSA). The Collagen-like domain occupies 57–90 (QGPAGVPGRDGSPGANGIPGTPGIPGRDGFKGEK). The segment at 62–85 (VPGRDGSPGANGIPGTPGIPGRDG) is disordered. The N-linked (GlcNAc...) asparagine glycan is linked to Asn-186.

Post-translationally, N-glycosylated. In terms of tissue distribution, isoform 1 is expressed in calcified atherosclerotic plaque and chondrocyte-like cells.

The protein resides in the secreted. Its subcellular location is the extracellular space. It is found in the extracellular matrix. In terms of biological role, may act as a negative regulator of collagen matrix deposition. The sequence is that of Collagen triple helix repeat-containing protein 1 (CTHRC1) from Homo sapiens (Human).